The sequence spans 349 residues: 4-hydroxy-2-oxovalerate aldolase 1 (349 aa).

Residues Ile-9–Gln-261 form the Pyruvate carboxyltransferase domain. Arg-17–Asp-18 contacts substrate. Asp-18 lines the Mn(2+) pocket. His-21 functions as the Proton acceptor in the catalytic mechanism. The substrate site is built by Ser-171 and His-200. Positions 200 and 202 each coordinate Mn(2+). Substrate is bound at residue Tyr-291.

The protein belongs to the 4-hydroxy-2-oxovalerate aldolase family.

It catalyses the reaction (S)-4-hydroxy-2-oxopentanoate = acetaldehyde + pyruvate. In Methylibium petroleiphilum (strain ATCC BAA-1232 / LMG 22953 / PM1), this protein is 4-hydroxy-2-oxovalerate aldolase 1.